The following is a 385-amino-acid chain: Aryl-alcohol dehydrogenase [NADP(+)] (385 aa).

The Proton donor role is filled by Y76. Residue 238–248 (NVLCAGKIRTD) participates in NADP(+) binding.

This sequence belongs to the aldo/keto reductase family. Aldo/keto reductase 2 subfamily. Post-translationally, the N-terminus is blocked.

The catalysed reaction is an aromatic primary alcohol + NADP(+) = an aromatic aldehyde + NADPH + H(+). This chain is Aryl-alcohol dehydrogenase [NADP(+)], found in Phanerodontia chrysosporium (White-rot fungus).